The following is a 61-amino-acid chain: Metallothionein-1A (61 aa).

M1 is modified (N-acetylmethionine). Residues 1–29 (MDPNCSCPTGGSCSCAGSCTCKACRCTSC) are beta. Positions 5, 7, 13, 15, 19, 21, 24, 26, 29, 33, 34, 36, 37, 41, 44, 48, 50, and 57 each coordinate a divalent metal cation. The alpha stretch occupies residues 30–61 (KKSCCSCCPAGCARCAQGCICKGASDKCSCCA). Position 58 is a phosphoserine (S58). Positions 59 and 60 each coordinate a divalent metal cation.

Belongs to the metallothionein superfamily. Type 1 family. As to quaternary structure, monomer.

Functionally, metallothioneins have a high content of cysteine residues that bind various heavy metals; these proteins are transcriptionally regulated by both heavy metals and glucocorticoids. The polypeptide is Metallothionein-1A (MT1A) (Sus scrofa (Pig)).